A 974-amino-acid polypeptide reads, in one-letter code: Exocyst complex component 4 (974 aa).

Alanine 2 is subject to N-acetylalanine. The residue at position 9 (lysine 9) is an N6-acetyllysine. Phosphoserine is present on residues serine 32 and serine 226. A coiled-coil region spans residues 32–114; sequence STSDDVEDRE…HCKRDELRKL (83 aa). A phosphothreonine mark is found at threonine 233 and threonine 237. A Phosphoserine modification is found at serine 468.

It belongs to the SEC8 family. As to quaternary structure, the exocyst complex is composed of EXOC1, EXOC2, EXOC3, EXOC4, EXOC5, EXOC6, EXOC7 and EXOC8. Interacts with BIRC6/bruce. Interacts with MYRIP. Interacts with SH3BP1; required for the localization of both SH3BP1 and the exocyst to the leading edge of migrating cells. Interacts with SLC6A9.

The protein localises to the midbody. Its subcellular location is the midbody ring. The protein resides in the cell projection. It is found in the cytoplasm. It localises to the cytoskeleton. The protein localises to the microtubule organizing center. Its subcellular location is the centrosome. Component of the exocyst complex involved in the docking of exocytic vesicles with fusion sites on the plasma membrane. The protein is Exocyst complex component 4 (EXOC4) of Homo sapiens (Human).